Reading from the N-terminus, the 308-residue chain is Ribosomal RNA large subunit methyltransferase F (308 aa).

The protein belongs to the methyltransferase superfamily. METTL16/RlmF family.

The protein localises to the cytoplasm. It catalyses the reaction adenosine(1618) in 23S rRNA + S-adenosyl-L-methionine = N(6)-methyladenosine(1618) in 23S rRNA + S-adenosyl-L-homocysteine + H(+). Functionally, specifically methylates the adenine in position 1618 of 23S rRNA. This is Ribosomal RNA large subunit methyltransferase F from Escherichia coli O17:K52:H18 (strain UMN026 / ExPEC).